A 952-amino-acid chain; its full sequence is Aminopeptidase 2, mitochondrial (952 aa).

A mitochondrion-targeting transit peptide spans 1–52 (MPIVRWLLLKSAVRGSSLIGKAHPCLRSIAAHPRYLSNVYSPPAGVSRSLRI). Substrate is bound by residues glutamate 228 and 360-364 (GAMEN). Asparagine 381 carries an N-linked (GlcNAc...) asparagine glycan. Residue histidine 396 participates in Zn(2+) binding. Glutamate 397 functions as the Proton acceptor in the catalytic mechanism. Residues histidine 400 and glutamate 419 each coordinate Zn(2+). An N-linked (GlcNAc...) asparagine glycan is attached at asparagine 713.

It belongs to the peptidase M1 family. Zn(2+) serves as cofactor.

Its subcellular location is the periplasm. It localises to the cytoplasm. It is found in the mitochondrion. Its function is as follows. Involved in the cellular supply of leucine from externally offered leucine-containing dipeptide substrates. In Saccharomyces cerevisiae (strain ATCC 204508 / S288c) (Baker's yeast), this protein is Aminopeptidase 2, mitochondrial (APE2).